A 537-amino-acid polypeptide reads, in one-letter code: Tyrosine-protein kinase Yes (537 aa).

The segment covering 1–22 (MGCIKSKEDKGPSIKYRTEPKP) has biased composition (basic and acidic residues). The interval 1 to 60 (MGCIKSKEDKGPSIKYRTEPKPDPGSQYGADPTQATQSPGIKGPAPNFNSHSMTPFGGSS) is disordered. Residue Gly-2 is the site of N-myristoyl glycine attachment. Cys-3 is lipidated: S-palmitoyl cysteine; in membrane form. The SH3 domain maps to 85-146 (GGVTVFVALY…PSNYVAPADS (62 aa)). The SH2 domain maps to 152 to 249 (WYFGKMGRKD…GLCYRLTTVC (98 aa)). Residues 271–524 (LRLDVKLGQG…YIQSFLEDYF (254 aa)) form the Protein kinase domain. ATP contacts are provided by residues 277-285 (LGQGCFGEV) and Lys-299. Asp-390 functions as the Proton acceptor in the catalytic mechanism. Tyr-420 bears the Phosphotyrosine; by autocatalysis mark. A Phosphotyrosine; by CSK modification is found at Tyr-531.

Belongs to the protein kinase superfamily. Tyr protein kinase family. SRC subfamily. Post-translationally, autophosphorylated at Tyr-420 inducing activation. In terms of processing, palmitoylation at Cys-3 promotes membrane localization.

It localises to the cell membrane. Its subcellular location is the cytoplasm. The protein localises to the cytoskeleton. The protein resides in the microtubule organizing center. It is found in the centrosome. It localises to the cytosol. Its subcellular location is the cell junction. It carries out the reaction L-tyrosyl-[protein] + ATP = O-phospho-L-tyrosyl-[protein] + ADP + H(+). Non-receptor protein tyrosine kinase that is involved in the regulation of cell growth and survival, apoptosis, cell-cell adhesion, cytoskeleton remodeling, differentiation, G2/M progression and cytokinesis. The polypeptide is Tyrosine-protein kinase Yes (yes1) (Xenopus laevis (African clawed frog)).